We begin with the raw amino-acid sequence, 419 residues long: S-adenosylmethionine synthase (419 aa).

Position 15 (His-15) interacts with ATP. Mg(2+) is bound at residue Asp-17. Glu-43 serves as a coordination point for K(+). The L-methionine site is built by Glu-56 and Gln-100. Positions 100–110 (QSPDIAQGVDE) are flexible loop. Residues 171-173 (DGK), 248-249 (KF), Asp-257, 263-264 (RK), Ala-280, and Lys-284 each bind ATP. Residue Asp-257 coordinates L-methionine. Lys-288 serves as a coordination point for L-methionine.

This sequence belongs to the AdoMet synthase family. In terms of assembly, homotetramer; dimer of dimers. The cofactor is Mg(2+). Requires K(+) as cofactor.

The protein localises to the cytoplasm. The catalysed reaction is L-methionine + ATP + H2O = S-adenosyl-L-methionine + phosphate + diphosphate. The protein operates within amino-acid biosynthesis; S-adenosyl-L-methionine biosynthesis; S-adenosyl-L-methionine from L-methionine: step 1/1. Functionally, catalyzes the formation of S-adenosylmethionine (AdoMet) from methionine and ATP. The overall synthetic reaction is composed of two sequential steps, AdoMet formation and the subsequent tripolyphosphate hydrolysis which occurs prior to release of AdoMet from the enzyme. In Synechococcus sp. (strain CC9311), this protein is S-adenosylmethionine synthase.